Here is a 221-residue protein sequence, read N- to C-terminus: Lipoprotein-releasing system ATP-binding protein LolD (221 aa).

Residues 8 to 220 (LKMISKHYKQ…YNLKHGLLNI (213 aa)) form the ABC transporter domain. An ATP-binding site is contributed by 42–49 (GSSGSGKS).

The protein belongs to the ABC transporter superfamily. Lipoprotein translocase (TC 3.A.1.125) family. As to quaternary structure, the complex is composed of two ATP-binding proteins (LolD) and two transmembrane proteins (LolC and LolE).

It localises to the cell inner membrane. Functionally, part of the ABC transporter complex LolCDE involved in the translocation of mature outer membrane-directed lipoproteins, from the inner membrane to the periplasmic chaperone, LolA. Responsible for the formation of the LolA-lipoprotein complex in an ATP-dependent manner. This chain is Lipoprotein-releasing system ATP-binding protein LolD, found in Rickettsia prowazekii (strain Madrid E).